Reading from the N-terminus, the 337-residue chain is Mycothiol acetyltransferase (337 aa).

2 N-acetyltransferase domains span residues 11–151 and 154–337; these read LDER…FELP and VRLR…MYRK. Glu37 is a 1D-myo-inositol 2-(L-cysteinylamino)-2-deoxy-alpha-D-glucopyranoside binding site. 81 to 83 contacts acetyl-CoA; that stretch reads LVI. Residue Glu182 coordinates 1D-myo-inositol 2-(L-cysteinylamino)-2-deoxy-alpha-D-glucopyranoside. Residues 210–246 are disordered; sequence RPTGSGDGDVADGGSTDGGPADSGSADGGAGEGGTGD. A compositionally biased stretch (low complexity) spans 221–234; that stretch reads DGGSTDGGPADSGS. The span at 235–246 shows a compositional bias: gly residues; sequence ADGGAGEGGTGD. 1D-myo-inositol 2-(L-cysteinylamino)-2-deoxy-alpha-D-glucopyranoside is bound by residues Lys257 and Glu271. Residues 275–277 and 282–288 each bind acetyl-CoA; these read VGV and QGGGLGR. Tyr309 contacts 1D-myo-inositol 2-(L-cysteinylamino)-2-deoxy-alpha-D-glucopyranoside. 314 to 319 is an acetyl-CoA binding site; that stretch reads NTAAIR.

The protein belongs to the acetyltransferase family. MshD subfamily. Monomer.

The enzyme catalyses 1D-myo-inositol 2-(L-cysteinylamino)-2-deoxy-alpha-D-glucopyranoside + acetyl-CoA = mycothiol + CoA + H(+). Catalyzes the transfer of acetyl from acetyl-CoA to desacetylmycothiol (Cys-GlcN-Ins) to form mycothiol. This chain is Mycothiol acetyltransferase, found in Streptosporangium roseum (strain ATCC 12428 / DSM 43021 / JCM 3005 / KCTC 9067 / NCIMB 10171 / NRRL 2505 / NI 9100).